Consider the following 123-residue polypeptide: MKTKLGFNRLSRKSSHRRALLKNMVISFLKHEKISSTKAKLFEVKRFAERLITRAKVDTVHNRRELSKFIHDKYILNKLFTKISPVFRQRSGGYTRMIKLGKRYGDAAEMAILELVEKPLKVE.

It belongs to the bacterial ribosomal protein bL17 family. In terms of assembly, part of the 50S ribosomal subunit. Contacts protein L32.

The sequence is that of Large ribosomal subunit protein bL17 from Borrelia garinii subsp. bavariensis (strain ATCC BAA-2496 / DSM 23469 / PBi) (Borreliella bavariensis).